The following is a 417-amino-acid chain: Gamma-glutamyl phosphate reductase (417 aa).

Belongs to the gamma-glutamyl phosphate reductase family.

It is found in the cytoplasm. It carries out the reaction L-glutamate 5-semialdehyde + phosphate + NADP(+) = L-glutamyl 5-phosphate + NADPH + H(+). It participates in amino-acid biosynthesis; L-proline biosynthesis; L-glutamate 5-semialdehyde from L-glutamate: step 2/2. Catalyzes the NADPH-dependent reduction of L-glutamate 5-phosphate into L-glutamate 5-semialdehyde and phosphate. The product spontaneously undergoes cyclization to form 1-pyrroline-5-carboxylate. This chain is Gamma-glutamyl phosphate reductase, found in Klebsiella pneumoniae subsp. pneumoniae (strain ATCC 700721 / MGH 78578).